We begin with the raw amino-acid sequence, 101 residues long: UPF0134 protein MPN_675 (101 aa).

Belongs to the UPF0134 family.

This is UPF0134 protein MPN_675 from Mycoplasma pneumoniae (strain ATCC 29342 / M129 / Subtype 1) (Mycoplasmoides pneumoniae).